Reading from the N-terminus, the 206-residue chain is MVKIIGIAGGSGSGKTTIVNKISEVIPEFVLISQDNYYKSVGDYEYEFLDVNFDHPDAFDNNLFYKQLKKIKENKLIHMPLYDFINHRRKDETVEIVPTPVVIVEGIMIFVEERVRNLIDLKIYIDTPNDIRFIRRLERDMSKRGRTLESVIEQYLSTTRAGYYRFIEPTKEYADLIIPEGGHNDKALYVLSSFLRTLGKEGADFF.

9–16 contributes to the ATP binding site; that stretch reads GGSGSGKT.

It belongs to the uridine kinase family.

It localises to the cytoplasm. The catalysed reaction is uridine + ATP = UMP + ADP + H(+). It catalyses the reaction cytidine + ATP = CMP + ADP + H(+). The protein operates within pyrimidine metabolism; CTP biosynthesis via salvage pathway; CTP from cytidine: step 1/3. It functions in the pathway pyrimidine metabolism; UMP biosynthesis via salvage pathway; UMP from uridine: step 1/1. The protein is Uridine kinase of Borrelia hermsii (strain HS1 / DAH).